We begin with the raw amino-acid sequence, 489 residues long: Endoglucanase 4 (489 aa).

Residues Met1 to Ala25 form the signal peptide. Asp81 serves as the catalytic Nucleophile. The active site involves His409. A glycan (N-linked (GlcNAc...) asparagine) is linked at Asn453. Residues Asp460 and Glu469 contribute to the active site.

This sequence belongs to the glycosyl hydrolase 9 (cellulase E) family.

Its subcellular location is the secreted. The enzyme catalyses Endohydrolysis of (1-&gt;4)-beta-D-glucosidic linkages in cellulose, lichenin and cereal beta-D-glucans.. The protein is Endoglucanase 4 of Arabidopsis thaliana (Mouse-ear cress).